Consider the following 263-residue polypeptide: Uracil-DNA glycosylase (263 aa).

The Proton acceptor role is filled by Asp-94.

The protein belongs to the uracil-DNA glycosylase (UDG) superfamily. UNG family.

The protein resides in the cytoplasm. It catalyses the reaction Hydrolyzes single-stranded DNA or mismatched double-stranded DNA and polynucleotides, releasing free uracil.. Its function is as follows. Excises uracil residues from the DNA which can arise as a result of misincorporation of dUMP residues by DNA polymerase or due to deamination of cytosine. This chain is Uracil-DNA glycosylase, found in Ralstonia pickettii (strain 12J).